Here is a 605-residue protein sequence, read N- to C-terminus: Pyruvate decarboxylase 2 (605 aa).

Substrate is bound by residues aspartate 68 and histidine 155. The thiamine pyrophosphate binding stretch occupies residues 433–515 (DSWFNCQKLK…FLINNGGYTI (83 aa)). Mg(2+) is bound by residues aspartate 483, asparagine 510, and glycine 512. Residue glutamate 516 participates in substrate binding.

It belongs to the TPP enzyme family. As to quaternary structure, homotetramer. A metal cation serves as cofactor. The cofactor is thiamine diphosphate.

The enzyme catalyses a 2-oxocarboxylate + H(+) = an aldehyde + CO2. This chain is Pyruvate decarboxylase 2 (PDC2), found in Oryza sativa subsp. japonica (Rice).